A 72-amino-acid chain; its full sequence is Small ribosomal subunit protein bS18c (72 aa).

Belongs to the bacterial ribosomal protein bS18 family. As to quaternary structure, part of the 30S ribosomal subunit.

Its subcellular location is the plastid. It localises to the chloroplast. The protein is Small ribosomal subunit protein bS18c of Emiliania huxleyi (Coccolithophore).